We begin with the raw amino-acid sequence, 567 residues long: Diphtheria toxin (567 aa).

The N-terminal stretch at 1–32 (MLVRGYVVSRKLFASILIGALLGIGAPPSAHA) is a signal peptide. His53 and Tyr97 together coordinate NAD(+). The active site involves Glu180. Disulfide bonds link Cys218-Cys233 and Cys493-Cys503.

In terms of assembly, homodimer. Proteolytic activation by host furin cleaves the protein in two parts, Diphtheria toxin fragment A and Diphtheria toxin fragment B; which remain associated via a disulfide bond.

It catalyses the reaction diphthamide-[translation elongation factor 2] + NAD(+) = N-(ADP-D-ribosyl)diphthamide-[translation elongation factor 2] + nicotinamide + H(+). With respect to regulation, partially inhibited by 1,8-naphthalimide (NAP). Functionally, diphtheria toxin, produced by a phage infecting Corynebacterium diphtheriae, is a proenzyme that, after activation, catalyzes the covalent attachment of the ADP ribose moiety of NAD to eukaryotic elongation factor 2 (eEF-2). Fragment A is the catalytic portion responsible for enzymatic ADP-ribosylation of elongation factor 2, while fragment B is responsible for binding of toxin to cell receptors and entry of fragment A. The protein is Diphtheria toxin of Corynebacterium diphtheriae.